Consider the following 248-residue polypeptide: Cell division protein FtsQ (248 aa).

The Cytoplasmic portion of the chain corresponds to 1–4 (MGTR). The chain crosses the membrane as a helical span at residues 5-25 (LRALLGVLILLVLGGAGWLFL). The Periplasmic portion of the chain corresponds to 26-248 (RWEPTLLPIR…RVAARAGNRR (223 aa)). A POTRA domain is found at 32–101 (LPIRLIQIEG…DTLRVQVREY (70 aa)).

Belongs to the FtsQ/DivIB family. FtsQ subfamily. Part of a complex composed of FtsB, FtsL and FtsQ.

It localises to the cell inner membrane. Its function is as follows. Essential cell division protein. May link together the upstream cell division proteins, which are predominantly cytoplasmic, with the downstream cell division proteins, which are predominantly periplasmic. May control correct divisome assembly. The sequence is that of Cell division protein FtsQ from Allochromatium vinosum (strain ATCC 17899 / DSM 180 / NBRC 103801 / NCIMB 10441 / D) (Chromatium vinosum).